The sequence spans 265 residues: Molybdenum-pterin-binding protein MopA (265 aa).

Mop domains are found at residues R126–A192 and R198–M264.

The protein belongs to the ModE family.

In Rhodobacter capsulatus (Rhodopseudomonas capsulata), this protein is Molybdenum-pterin-binding protein MopA (mopA).